Here is a 383-residue protein sequence, read N- to C-terminus: ATP phosphoribosyltransferase regulatory subunit (383 aa).

The protein belongs to the class-II aminoacyl-tRNA synthetase family. HisZ subfamily. As to quaternary structure, heteromultimer composed of HisG and HisZ subunits.

It is found in the cytoplasm. Its pathway is amino-acid biosynthesis; L-histidine biosynthesis; L-histidine from 5-phospho-alpha-D-ribose 1-diphosphate: step 1/9. Required for the first step of histidine biosynthesis. May allow the feedback regulation of ATP phosphoribosyltransferase activity by histidine. This is ATP phosphoribosyltransferase regulatory subunit from Neisseria meningitidis serogroup C / serotype 2a (strain ATCC 700532 / DSM 15464 / FAM18).